A 239-amino-acid chain; its full sequence is Small ribosomal subunit protein uS2 (239 aa).

The protein belongs to the universal ribosomal protein uS2 family.

This is Small ribosomal subunit protein uS2 from Francisella tularensis subsp. holarctica (strain FTNF002-00 / FTA).